Here is a 130-residue protein sequence, read N- to C-terminus: MAIQYNYGTGRRKSAVARVFIKSGTGVITVNHKPADEYFSRETGRMIIRQPLELTGNSTNLDIMVNIRGGGESGQAGAVRHGITRALIDYDETLKSVLSKAGFVTRDAREVERKKVGFRKARRRKQFSKR.

It belongs to the universal ribosomal protein uS9 family.

The polypeptide is Small ribosomal subunit protein uS9 (Nitrosomonas eutropha (strain DSM 101675 / C91 / Nm57)).